The sequence spans 603 residues: Elongation factor 4 (603 aa).

Residues 7 to 189 (SHIRNFSIIA…SIVHLVPPPR (183 aa)) enclose the tr-type G domain. Residues 19-24 (DHGKST) and 136-139 (NKID) contribute to the GTP site.

The protein belongs to the TRAFAC class translation factor GTPase superfamily. Classic translation factor GTPase family. LepA subfamily.

It is found in the cell inner membrane. The enzyme catalyses GTP + H2O = GDP + phosphate + H(+). Its function is as follows. Required for accurate and efficient protein synthesis under certain stress conditions. May act as a fidelity factor of the translation reaction, by catalyzing a one-codon backward translocation of tRNAs on improperly translocated ribosomes. Back-translocation proceeds from a post-translocation (POST) complex to a pre-translocation (PRE) complex, thus giving elongation factor G a second chance to translocate the tRNAs correctly. Binds to ribosomes in a GTP-dependent manner. This Thermosynechococcus vestitus (strain NIES-2133 / IAM M-273 / BP-1) protein is Elongation factor 4.